The primary structure comprises 453 residues: Alpha-2B adrenergic receptor (453 aa).

The Extracellular portion of the chain corresponds to 1 to 17 (MSGPAMVHQEPYSVQAT). The chain crosses the membrane as a helical span at residues 18–42 (AAIASAITFLILFTIFGNALVILAV). The Cytoplasmic segment spans residues 43–54 (LTSRSLRAPQNL). Residues 55-80 (FLVSLAAADILVATLIIPFSLANELL) traverse the membrane as a helical segment. Topologically, residues 81-90 (GYWYFWRAWC) are extracellular. The cysteines at positions 90 and 169 are disulfide-linked. A helical transmembrane segment spans residues 91–113 (EVYLALDVLFCTSSIVHLCAISL). The Cytoplasmic portion of the chain corresponds to 114-135 (DRYWAVSRALEYNSKRTPRRIK). A helical transmembrane segment spans residues 136–158 (CIILTVWLIAAVISLPPLIYKGD). Residues 159–174 (QRPEPHGLPQCELNQE) lie on the Extracellular side of the membrane. Residues 175–198 (AWYILASSIGSFFAPCLIMILVYL) traverse the membrane as a helical segment. Over 199 to 375 (RIYVIAKRSH…LSREKRFTFV (177 aa)) the chain is Cytoplasmic. A disordered region spans residues 214–329 (AKRGSGEGES…ASPASVFNPP (116 aa)). Acidic residues predominate over residues 303 to 314 (AEEDEEEVEECE). Residues 376–399 (LAVVIGVFVVCWFPFFFSYSLGAI) form a helical membrane-spanning segment. Over 400–408 (CPQHCKVPH) the chain is Extracellular. The helical transmembrane segment at 409 to 432 (GLFQFFFWIGYCNSSLNPVIYTIF) threads the bilayer. Residues 433–453 (NQDFRRAFRRILCRQWTQTGW) lie on the Cytoplasmic side of the membrane. Residue C445 is the site of S-palmitoyl cysteine attachment.

This sequence belongs to the G-protein coupled receptor 1 family. Adrenergic receptor subfamily. ADRA2B sub-subfamily. Interacts with RAB26. Interacts with PPP1R9B. Interacts with GGA1, GGA2 and GGA3.

Its subcellular location is the cell membrane. In terms of biological role, alpha-2 adrenergic receptors mediate the catecholamine-induced inhibition of adenylate cyclase through the action of G proteins. This chain is Alpha-2B adrenergic receptor (Adra2b), found in Mus musculus (Mouse).